The sequence spans 134 residues: ATP synthase epsilon chain (134 aa).

The protein belongs to the ATPase epsilon chain family. F-type ATPases have 2 components, CF(1) - the catalytic core - and CF(0) - the membrane proton channel. CF(1) has five subunits: alpha(3), beta(3), gamma(1), delta(1), epsilon(1). CF(0) has three main subunits: a, b and c.

The protein localises to the cellular thylakoid membrane. Functionally, produces ATP from ADP in the presence of a proton gradient across the membrane. This chain is ATP synthase epsilon chain, found in Prochlorococcus marinus (strain MIT 9312).